Consider the following 140-residue polypeptide: Putative nickel-responsive regulator 3 (140 aa).

Ni(2+)-binding residues include H81, H92, H94, and C100.

The protein belongs to the transcriptional regulatory CopG/NikR family. Ni(2+) serves as cofactor.

In terms of biological role, transcriptional regulator. The polypeptide is Putative nickel-responsive regulator 3 (Methanosarcina mazei (strain ATCC BAA-159 / DSM 3647 / Goe1 / Go1 / JCM 11833 / OCM 88) (Methanosarcina frisia)).